Consider the following 612-residue polypeptide: Glycosyltransferase 25 family member (612 aa).

A signal peptide spans 1-20 (MNKQVIFGLLLACILVCISG). 4 N-linked (GlcNAc...) asparagine glycosylation sites follow: N106, N227, N263, and N524. The Prevents secretion from ER motif lies at 609–612 (HQEL).

It belongs to the glycosyltransferase 25 family.

Its subcellular location is the endoplasmic reticulum lumen. The polypeptide is Glycosyltransferase 25 family member (Drosophila melanogaster (Fruit fly)).